The sequence spans 256 residues: uncharacterized protein (256 aa).

Position 29-36 (29-36 (GDDHSGKT)) interacts with ATP.

This is an uncharacterized protein from Saccharomyces cerevisiae (strain ATCC 204508 / S288c) (Baker's yeast).